The primary structure comprises 635 residues: Threonine--tRNA ligase (635 aa).

The TGS domain occupies 1–61 (MVSIRLPDGS…DHDVALAIVT (61 aa)). The tract at residues 242-533 (DHRKLGKQLD…LIEHHAGAMP (292 aa)) is catalytic. Positions 333, 384, and 510 each coordinate Zn(2+).

The protein belongs to the class-II aminoacyl-tRNA synthetase family. In terms of assembly, homodimer. Zn(2+) serves as cofactor.

It localises to the cytoplasm. It catalyses the reaction tRNA(Thr) + L-threonine + ATP = L-threonyl-tRNA(Thr) + AMP + diphosphate + H(+). In terms of biological role, catalyzes the attachment of threonine to tRNA(Thr) in a two-step reaction: L-threonine is first activated by ATP to form Thr-AMP and then transferred to the acceptor end of tRNA(Thr). Also edits incorrectly charged L-seryl-tRNA(Thr). The protein is Threonine--tRNA ligase of Paraburkholderia phytofirmans (strain DSM 17436 / LMG 22146 / PsJN) (Burkholderia phytofirmans).